The following is a 945-amino-acid chain: Isoleucine--tRNA ligase (945 aa).

The 'HIGH' region signature appears at 66-76 (PYANGDIHLGH). E581 is a binding site for L-isoleucyl-5'-AMP. The short motif at 622 to 626 (KMSKS) is the 'KMSKS' region element. Residue K625 coordinates ATP. Zn(2+) is bound by residues C908, C911, C928, and C931.

This sequence belongs to the class-I aminoacyl-tRNA synthetase family. IleS type 1 subfamily. As to quaternary structure, monomer. The cofactor is Zn(2+).

It localises to the cytoplasm. It catalyses the reaction tRNA(Ile) + L-isoleucine + ATP = L-isoleucyl-tRNA(Ile) + AMP + diphosphate. Catalyzes the attachment of isoleucine to tRNA(Ile). As IleRS can inadvertently accommodate and process structurally similar amino acids such as valine, to avoid such errors it has two additional distinct tRNA(Ile)-dependent editing activities. One activity is designated as 'pretransfer' editing and involves the hydrolysis of activated Val-AMP. The other activity is designated 'posttransfer' editing and involves deacylation of mischarged Val-tRNA(Ile). This chain is Isoleucine--tRNA ligase, found in Burkholderia cenocepacia (strain HI2424).